The primary structure comprises 161 residues: Phosphopantetheine adenylyltransferase (161 aa).

Serine 9 serves as a coordination point for substrate. Residues 9-10 (SF) and histidine 17 contribute to the ATP site. Lysine 41, threonine 73, and arginine 87 together coordinate substrate. ATP contacts are provided by residues 88 to 90 (GLR), glutamate 98, and 123 to 129 (FAHISST).

It belongs to the bacterial CoaD family. As to quaternary structure, homohexamer. Mg(2+) is required as a cofactor.

It is found in the cytoplasm. It carries out the reaction (R)-4'-phosphopantetheine + ATP + H(+) = 3'-dephospho-CoA + diphosphate. The protein operates within cofactor biosynthesis; coenzyme A biosynthesis; CoA from (R)-pantothenate: step 4/5. In terms of biological role, reversibly transfers an adenylyl group from ATP to 4'-phosphopantetheine, yielding dephospho-CoA (dPCoA) and pyrophosphate. This Chloroflexus aurantiacus (strain ATCC 29366 / DSM 635 / J-10-fl) protein is Phosphopantetheine adenylyltransferase.